The sequence spans 109 residues: Small ribosomal subunit protein bS6c (109 aa).

This sequence belongs to the bacterial ribosomal protein bS6 family.

Its subcellular location is the plastid. It is found in the chloroplast. Binds together with bS18 to 16S ribosomal RNA. The polypeptide is Small ribosomal subunit protein bS6c (Pyropia yezoensis (Susabi-nori)).